Consider the following 401-residue polypeptide: S-adenosylmethionine synthase (401 aa).

137–142 (GEGSGD) contacts ATP. The interval 272–305 (GTSAEQGDDGSVGRGNRSNGLITPNRSMSMEATS) is disordered. The span at 287 to 305 (NRSNGLITPNRSMSMEATS) shows a compositional bias: polar residues.

The protein belongs to the AdoMet synthase 2 family. The cofactor is Mg(2+).

The catalysed reaction is L-methionine + ATP + H2O = S-adenosyl-L-methionine + phosphate + diphosphate. The protein operates within amino-acid biosynthesis; S-adenosyl-L-methionine biosynthesis; S-adenosyl-L-methionine from L-methionine: step 1/1. In terms of biological role, catalyzes the formation of S-adenosylmethionine from methionine and ATP. The polypeptide is S-adenosylmethionine synthase (Natronomonas pharaonis (strain ATCC 35678 / DSM 2160 / CIP 103997 / JCM 8858 / NBRC 14720 / NCIMB 2260 / Gabara) (Halobacterium pharaonis)).